The primary structure comprises 287 residues: Undecaprenyl-diphosphatase (287 aa).

Transmembrane regions (helical) follow at residues 50–70 (PGVS…IAYF), 97–117 (LGFA…GIKF), 131–151 (IPSI…AEQV), 160–180 (VVLG…LLPG), 206–226 (FLLG…DALA), 234–254 (LPLL…IDWL), and 264–284 (WLFV…WGVY).

This sequence belongs to the UppP family.

It is found in the cell inner membrane. The enzyme catalyses di-trans,octa-cis-undecaprenyl diphosphate + H2O = di-trans,octa-cis-undecaprenyl phosphate + phosphate + H(+). In terms of biological role, catalyzes the dephosphorylation of undecaprenyl diphosphate (UPP). Confers resistance to bacitracin. The chain is Undecaprenyl-diphosphatase from Synechococcus sp. (strain CC9605).